Here is a 127-residue protein sequence, read N- to C-terminus: Protein SPIRAL1-like 4 (127 aa).

The segment at 1-127 (MGKARGVNSG…FGSGPCGSDK (127 aa)) is disordered. Over residues 39–48 (TTTTTTTTTT) the composition is skewed to low complexity. S80 carries the post-translational modification Phosphoserine. Positions 80–94 (SPNNYYRSDGQNCGN) are enriched in polar residues.

It belongs to the SPIRAL1 family. Ubiquitous.

Acts redundantly with SPR1 in maintaining the cortical microtubules organization essential for anisotropic cell growth. This is Protein SPIRAL1-like 4 (SP1L4) from Arabidopsis thaliana (Mouse-ear cress).